The following is an 875-amino-acid chain: Alanine--tRNA ligase (875 aa).

Zn(2+) contacts are provided by histidine 564, histidine 568, cysteine 666, and histidine 670.

It belongs to the class-II aminoacyl-tRNA synthetase family. Homotetramer. The cofactor is Zn(2+).

It localises to the cytoplasm. It carries out the reaction tRNA(Ala) + L-alanine + ATP = L-alanyl-tRNA(Ala) + AMP + diphosphate. Catalyzes the attachment of alanine to tRNA(Ala) in a two-step reaction: alanine is first activated by ATP to form Ala-AMP and then transferred to the acceptor end of tRNA(Ala). Also edits incorrectly charged Ser-tRNA(Ala) and Gly-tRNA(Ala) via its editing domain. This chain is Alanine--tRNA ligase, found in Yersinia enterocolitica serotype O:8 / biotype 1B (strain NCTC 13174 / 8081).